A 309-amino-acid chain; its full sequence is ATP synthase gamma chain (309 aa).

This sequence belongs to the ATPase gamma chain family. F-type ATPases have 2 components, CF(1) - the catalytic core - and CF(0) - the membrane proton channel. CF(1) has five subunits: alpha(3), beta(3), gamma(1), delta(1), epsilon(1). CF(0) has three main subunits: a, b and c.

The protein localises to the cell membrane. Produces ATP from ADP in the presence of a proton gradient across the membrane. The gamma chain is believed to be important in regulating ATPase activity and the flow of protons through the CF(0) complex. The polypeptide is ATP synthase gamma chain (Ligilactobacillus salivarius (strain UCC118) (Lactobacillus salivarius)).